The following is a 271-amino-acid chain: Thiazole synthase (271 aa).

The active-site Schiff-base intermediate with DXP is the Lys95. Residues Gly156, 182-183, and 204-205 contribute to the 1-deoxy-D-xylulose 5-phosphate site; these read AG and NT.

This sequence belongs to the ThiG family. In terms of assembly, homotetramer. Forms heterodimers with either ThiH or ThiS.

The protein resides in the cytoplasm. It catalyses the reaction [ThiS sulfur-carrier protein]-C-terminal-Gly-aminoethanethioate + 2-iminoacetate + 1-deoxy-D-xylulose 5-phosphate = [ThiS sulfur-carrier protein]-C-terminal Gly-Gly + 2-[(2R,5Z)-2-carboxy-4-methylthiazol-5(2H)-ylidene]ethyl phosphate + 2 H2O + H(+). It functions in the pathway cofactor biosynthesis; thiamine diphosphate biosynthesis. Catalyzes the rearrangement of 1-deoxy-D-xylulose 5-phosphate (DXP) to produce the thiazole phosphate moiety of thiamine. Sulfur is provided by the thiocarboxylate moiety of the carrier protein ThiS. In vitro, sulfur can be provided by H(2)S. The sequence is that of Thiazole synthase from Yersinia pseudotuberculosis serotype O:3 (strain YPIII).